A 133-amino-acid polypeptide reads, in one-letter code: Small ribosomal subunit protein uS8 (133 aa).

This sequence belongs to the universal ribosomal protein uS8 family. As to quaternary structure, part of the 30S ribosomal subunit. Contacts proteins S5 and S12.

Functionally, one of the primary rRNA binding proteins, it binds directly to 16S rRNA central domain where it helps coordinate assembly of the platform of the 30S subunit. This Orientia tsutsugamushi (strain Boryong) (Rickettsia tsutsugamushi) protein is Small ribosomal subunit protein uS8.